A 633-amino-acid polypeptide reads, in one-letter code: MA3 DOMAIN-CONTAINING TRANSLATION REGULATORY FACTOR 4 (633 aa).

MI domains are found at residues 56–177 (DYKR…RAKK), 220–341 (ETKR…ERSD), 351–472 (RFKK…EISN), and 514–633 (DAKD…STDS). Residues 94–101 (VKRLVSMA) carry the Nuclear localization signal 1 motif. Residues 389–396 (LKKLITLA) carry the Nuclear localization signal 2 motif.

This sequence belongs to the PDCD4 family. As to quaternary structure, binds to EIF4A1. The association with ribosomes is modulated by cellular energy status and TOR activity. As to expression, mostly expressed, at low levels, in rosette leaves and flower buds, and, to a lower extent, in roots, stems, cauline leaves and flowers.

It is found in the nucleus. The protein localises to the cytoplasm. The protein resides in the cytosol. Functionally, involved in target of rapamycin (TOR)-regulated translation control, especially under energy-deficient conditions. The protein is MA3 DOMAIN-CONTAINING TRANSLATION REGULATORY FACTOR 4 of Arabidopsis thaliana (Mouse-ear cress).